Consider the following 87-residue polypeptide: Small ribosomal subunit protein bS20 (87 aa).

The disordered stretch occupies residues 1–22 (MANIKSQIKRIGTNKKAQERNK).

This sequence belongs to the bacterial ribosomal protein bS20 family.

Its function is as follows. Binds directly to 16S ribosomal RNA. This Clavibacter sepedonicus (Clavibacter michiganensis subsp. sepedonicus) protein is Small ribosomal subunit protein bS20.